The sequence spans 142 residues: Transcriptional regulator MraZ (142 aa).

2 SpoVT-AbrB domains span residues 5-51 (ASSL…PRPE) and 77-120 (AMDV…DKAT).

Belongs to the MraZ family. In terms of assembly, forms oligomers.

Its subcellular location is the cytoplasm. It is found in the nucleoid. This Variovorax paradoxus (strain S110) protein is Transcriptional regulator MraZ.